A 1219-amino-acid polypeptide reads, in one-letter code: Pheromone-regulated membrane protein 10 (1219 aa).

Positions 1–11 are enriched in basic and acidic residues; the sequence is MMRTQSDEHVA. Disordered stretches follow at residues 1-273, 303-490, 503-533, and 555-713; these read MMRT…IERE, LASF…DPFT, HDDD…EDYV, and EGNK…RPVK. The span at 42–53 shows a compositional bias: acidic residues; the sequence is DENDDGHDDSDE. Positions 57 to 68 are enriched in low complexity; the sequence is SVVIPTPSVVIV. Positions 104-115 are enriched in polar residues; the sequence is LKSPGTPTTYSP. Positions 136–155 are enriched in low complexity; it reads GSSLSSTTLMNTLLNSSGLG. 2 stretches are compositionally biased toward acidic residues: residues 159-171 and 219-231; these read TESE…DEEV and QEEE…DDDG. 3 stretches are compositionally biased toward basic and acidic residues: residues 259 to 273, 330 to 346, and 395 to 421; these read ADRA…IERE, DDQR…RREN, and LDRR…EKER. Over residues 422–432 the composition is skewed to basic residues; sequence QHHHHNHHHHH. Positions 435–446 are enriched in polar residues; sequence ETGPNTGASSPF. Residues 448-470 show a composition bias toward basic and acidic residues; sequence EEEKDREAEEAEILRDQARDLVN. Residues 565–577 show a composition bias toward low complexity; sequence TTVGDGTSTGDVS. The segment covering 598-615 has biased composition (basic residues); that stretch reads KSKTKTTQKLGLKKKKKE. The segment covering 616–641 has biased composition (basic and acidic residues); sequence LLKIIEDQRKEKEENKKRPKWYDKSR. Over residues 642-652 the composition is skewed to low complexity; the sequence is STSPSPGGTPA. Residues 653-673 are compositionally biased toward basic residues; that stretch reads PHHHHHIPGLHLHHHTKGHQR. Residues 693–713 are compositionally biased toward basic and acidic residues; that stretch reads GGDKPPDRPRSLRSEALRPVK. 10 consecutive transmembrane segments (helical) span residues 864–884, 888–908, 918–938, 945–965, 983–1003, 1021–1041, 1049–1069, 1075–1095, 1100–1120, and 1184–1204; these read PPWL…PYAF, WADI…QIIV, VFEV…GTIS, FCFA…YIVL, MFYA…GAVV, LDPL…ALVN, PSML…GANI, SSYL…NLYS, GLAF…GVAS, and LGFT…AATL.

It belongs to the ThrE exporter (TC 2.A.79) family.

Its subcellular location is the membrane. The protein is Pheromone-regulated membrane protein 10 of Yarrowia lipolytica (strain CLIB 122 / E 150) (Yeast).